Reading from the N-terminus, the 743-residue chain is 1,4-alpha-glucan branching enzyme GlgB (743 aa).

The active-site Nucleophile is the Asp-423. Glu-476 acts as the Proton donor in catalysis.

Belongs to the glycosyl hydrolase 13 family. GlgB subfamily. As to quaternary structure, monomer.

The catalysed reaction is Transfers a segment of a (1-&gt;4)-alpha-D-glucan chain to a primary hydroxy group in a similar glucan chain.. The protein operates within glycan biosynthesis; glycogen biosynthesis. Its function is as follows. Catalyzes the formation of the alpha-1,6-glucosidic linkages in glycogen by scission of a 1,4-alpha-linked oligosaccharide from growing alpha-1,4-glucan chains and the subsequent attachment of the oligosaccharide to the alpha-1,6 position. The sequence is that of 1,4-alpha-glucan branching enzyme GlgB from Pseudomonas fluorescens (strain Pf0-1).